The following is a 146-amino-acid chain: uncharacterized protein (146 aa).

The HTH marR-type domain maps to 1–137; the sequence is MLSQEFFNSF…TINVMNQIHE (137 aa).

This is an uncharacterized protein from Staphylococcus aureus (strain MRSA252).